Reading from the N-terminus, the 424-residue chain is Nuclear hormone receptor family member nhr-55 (424 aa).

Positions 1 to 19 are enriched in low complexity; that stretch reads MNSPSSSSSFCSSSSSPSS. A disordered region spans residues 1–20; that stretch reads MNSPSSSSSFCSSSSSPSSL. The segment at residues 25 to 100 is a DNA-binding region (nuclear receptor); the sequence is PDTCQVCGQK…VGMTIENFQF (76 aa). NR C4-type zinc fingers lie at residues 28 to 55 and 64 to 88; these read CQVC…FRRC and CRRN…LKKC. An NR LBD domain is found at 169 to 424; the sequence is EVPLHTPNAL…FSHPEVFIDL (256 aa).

This sequence belongs to the nuclear hormone receptor family.

It localises to the nucleus. Functionally, orphan nuclear receptor. This chain is Nuclear hormone receptor family member nhr-55 (nhr-55), found in Caenorhabditis elegans.